The following is a 529-amino-acid chain: Type I restriction enzyme StySPI methylase subunit (529 aa).

Residues 148-153 (QYFTPR), 178-180 (TAG), and Glu216 contribute to the S-adenosyl-L-methionine site. The disordered stretch occupies residues 424–443 (AEESEVADSEENKNADQHQA).

Belongs to the N(4)/N(6)-methyltransferase family. As to quaternary structure, the type I restriction/modification system is composed of three polypeptides R, M and S; the restriction enzyme has stoichiometry R(2)M(2)S(1) while the methyltransferase is M(2)S(1).

The catalysed reaction is a 2'-deoxyadenosine in DNA + S-adenosyl-L-methionine = an N(6)-methyl-2'-deoxyadenosine in DNA + S-adenosyl-L-homocysteine + H(+). In terms of biological role, the subtype gamma methyltransferase (M) subunit of a type I restriction enzyme. The M and S subunits together form a methyltransferase (MTase) that methylates A-2 on the top strand and A-3 on the bottom strand of the sequence 5'-AACN(6)GTRC-3'. In the presence of the R subunit the complex can also act as an endonuclease, binding to the same target sequence but cutting the DNA some distance from this site. Whether the DNA is cut or modified depends on the methylation state of the target sequence. When the target site is unmodified, the DNA is cut. When the target site is hemimethylated, the complex acts as a maintenance MTase modifying the DNA so that both strands become methylated. After locating a non-methylated recognition site, the enzyme complex serves as a molecular motor that translocates DNA in an ATP-dependent manner until a collision occurs that triggers cleavage. The protein is Type I restriction enzyme StySPI methylase subunit of Salmonella potsdam.